The primary structure comprises 273 residues: Manganese catalase (273 aa).

Residue Glu35 participates in Mn(2+) binding. Positions 57 and 61 each coordinate Ca(2+). Glu66, His69, Glu149, and His182 together coordinate Mn(2+). Ca(2+) contacts are provided by Asn220, Ser222, and Gly224. Positions 254 to 273 (EKPELKPAPPFVHNTLPGRE) are disordered.

The protein belongs to the manganese catalase family. It depends on Ca(2+) as a cofactor. Mn(2+) is required as a cofactor.

The catalysed reaction is 2 H2O2 = O2 + 2 H2O. In terms of biological role, catalyzes the decomposition of hydrogen peroxide into water and oxygen. In Bacillus subtilis (strain 168), this protein is Manganese catalase (ydbD).